The following is a 176-amino-acid chain: Small ribosomal subunit protein uS5 (176 aa).

The S5 DRBM domain occupies leucine 11–valine 74.

Belongs to the universal ribosomal protein uS5 family. In terms of assembly, part of the 30S ribosomal subunit. Contacts proteins S4 and S8.

With S4 and S12 plays an important role in translational accuracy. Functionally, located at the back of the 30S subunit body where it stabilizes the conformation of the head with respect to the body. The sequence is that of Small ribosomal subunit protein uS5 from Rickettsia massiliae (strain Mtu5).